The sequence spans 245 residues: Chymotrypsin B (245 aa).

Intrachain disulfides connect Cys-1–Cys-121, Cys-42–Cys-58, Cys-135–Cys-201, Cys-167–Cys-182, and Cys-191–Cys-220. The propeptide occupies 14-15; sequence AR. Residues 16-243 enclose the Peptidase S1 domain; the sequence is IVNGEEAVPH…LRGWVDQILA (228 aa). Catalysis depends on charge relay system residues His-57 and Asp-101. Ser-195 acts as the Charge relay system in catalysis.

This sequence belongs to the peptidase S1 family.

The protein resides in the secreted. It is found in the extracellular space. It carries out the reaction Preferential cleavage: Tyr-|-Xaa, Trp-|-Xaa, Phe-|-Xaa, Leu-|-Xaa.. The polypeptide is Chymotrypsin B (Gadus morhua (Atlantic cod)).